We begin with the raw amino-acid sequence, 426 residues long: 10-deoxymethynolide desosaminyltransferase (426 aa).

Belongs to the glycosyltransferase 28 family. In terms of assembly, forms a complex with DesVIII.

The enzyme catalyses 10-deoxymethynolide + dTDP-alpha-D-desosamine = 10-deoxymethymycin + dTDP + H(+). It functions in the pathway antibiotic biosynthesis. Its function is as follows. Involved in the biosynthesis of the macrolide antibiotics methymycin, neomethymycin, narbomycin, and pikromycin. Catalyzes the attachment of dTDP-D-desosamine onto 12- and 14-membered macrolactone rings 10-deoxymethynolide and narbonolide to produce 10-deoxymethymycin (YC-17) and narbomycin. DesVII is unique among glycosyltransferases in that it requires an additional protein component, DesVIII, for its activity. DesVII can recognize and process not only cyclic substrates of different ring size, but also a variety of linear substrates albeit with reduced, but measurable activities. Both L-sugars and D-sugars are recognized as substrates and variant substitutions at C-3 and C-4 are tolerated, but deoxygenation at C-6 is required. The chain is 10-deoxymethynolide desosaminyltransferase from Streptomyces venezuelae.